A 701-amino-acid polypeptide reads, in one-letter code: Type 3 secretion system secretin (701 aa).

The signal sequence occupies residues 1–21 (MRKALMWLPLLLIGLSPATWA). Gly residues predominate over residues 229–238 (RGNGLAGGGS). Residues 229–252 (RGNGLAGGGSPDTPSLPMSSSGLD) form a disordered region. The segment covering 240-252 (DTPSLPMSSSGLD) has biased composition (polar residues).

The protein belongs to the bacterial secretin family. T3SS SctC subfamily. The core secretion machinery of the T3SS is composed of approximately 20 different proteins, including cytoplasmic components, a base, an export apparatus and a needle. This subunit is part of the base, which anchors the injectisome in the bacterial cell envelope. Forms a stable homooligomeric complex.

Its subcellular location is the cell outer membrane. In terms of biological role, component of the type III secretion system (T3SS), also called injectisome, which is used to inject bacterial effector proteins into eukaryotic host cells. Forms a ring-shaped multimeric structure with an apparent central pore in the outer membrane. Involved in the secretion of a proteinaceous elicitor of the hypersensitivity response in plants. The polypeptide is Type 3 secretion system secretin (Pseudomonas syringae pv. syringae).